Here is a 77-residue protein sequence, read N- to C-terminus: uncharacterized protein (77 aa).

This is an uncharacterized protein from Dictyostelium discoideum (Social amoeba).